A 184-amino-acid chain; its full sequence is ADP-ribosylation factor-like protein 2 (184 aa).

The N-myristoyl glycine moiety is linked to residue Gly2. GTP is bound by residues 23 to 30 (GLDNAGKT), 66 to 70 (DVGGQ), Gly68, and 125 to 128 (NKSD).

The protein belongs to the small GTPase superfamily. Arf family. In the embryo, strongly expressed in migrating hypodermal cells. Shortly before the beginning of elongation, expressed in many developing neurons where it persists throughout adulthood. In the larva, highly expressed in migrating hypodermal cells and the uterus. Also expressed in vulva, spermatheca, sheath cells, distal tips cells and proctoderm of the male tail.

The protein resides in the cytoplasm. It localises to the cell membrane. The protein localises to the cytoskeleton. Its subcellular location is the microtubule organizing center. It is found in the centrosome. In terms of biological role, GTP-binding protein that functions in embryogenesis, cytokinesis, germline development and microtubulule cytoskeleton dynamics. This is ADP-ribosylation factor-like protein 2 (evl-20) from Caenorhabditis elegans.